A 74-amino-acid chain; its full sequence is Putative Fe(2+) transport protein A (74 aa).

The protein belongs to the FeoA family.

Functionally, might be involved in Fe(2+) ion uptake. The protein is Putative Fe(2+) transport protein A of Campylobacter jejuni subsp. jejuni serotype O:2 (strain ATCC 700819 / NCTC 11168).